A 314-amino-acid polypeptide reads, in one-letter code: 4-hydroxy-3-methylbut-2-enyl diphosphate reductase (314 aa).

Cysteine 12 contacts [4Fe-4S] cluster. Residues histidine 41 and histidine 74 each coordinate (2E)-4-hydroxy-3-methylbut-2-enyl diphosphate. Dimethylallyl diphosphate-binding residues include histidine 41 and histidine 74. Residues histidine 41 and histidine 74 each coordinate isopentenyl diphosphate. A [4Fe-4S] cluster-binding site is contributed by cysteine 96. A (2E)-4-hydroxy-3-methylbut-2-enyl diphosphate-binding site is contributed by histidine 124. Residue histidine 124 coordinates dimethylallyl diphosphate. Residue histidine 124 coordinates isopentenyl diphosphate. Glutamate 126 (proton donor) is an active-site residue. Residue threonine 167 coordinates (2E)-4-hydroxy-3-methylbut-2-enyl diphosphate. Position 197 (cysteine 197) interacts with [4Fe-4S] cluster. Residues serine 225, serine 226, asparagine 227, and serine 269 each coordinate (2E)-4-hydroxy-3-methylbut-2-enyl diphosphate. Dimethylallyl diphosphate is bound by residues serine 225, serine 226, asparagine 227, and serine 269. Isopentenyl diphosphate-binding residues include serine 225, serine 226, asparagine 227, and serine 269.

This sequence belongs to the IspH family. The cofactor is [4Fe-4S] cluster.

It carries out the reaction isopentenyl diphosphate + 2 oxidized [2Fe-2S]-[ferredoxin] + H2O = (2E)-4-hydroxy-3-methylbut-2-enyl diphosphate + 2 reduced [2Fe-2S]-[ferredoxin] + 2 H(+). The catalysed reaction is dimethylallyl diphosphate + 2 oxidized [2Fe-2S]-[ferredoxin] + H2O = (2E)-4-hydroxy-3-methylbut-2-enyl diphosphate + 2 reduced [2Fe-2S]-[ferredoxin] + 2 H(+). It functions in the pathway isoprenoid biosynthesis; dimethylallyl diphosphate biosynthesis; dimethylallyl diphosphate from (2E)-4-hydroxy-3-methylbutenyl diphosphate: step 1/1. It participates in isoprenoid biosynthesis; isopentenyl diphosphate biosynthesis via DXP pathway; isopentenyl diphosphate from 1-deoxy-D-xylulose 5-phosphate: step 6/6. In terms of biological role, catalyzes the conversion of 1-hydroxy-2-methyl-2-(E)-butenyl 4-diphosphate (HMBPP) into a mixture of isopentenyl diphosphate (IPP) and dimethylallyl diphosphate (DMAPP). Acts in the terminal step of the DOXP/MEP pathway for isoprenoid precursor biosynthesis. The polypeptide is 4-hydroxy-3-methylbut-2-enyl diphosphate reductase (Haemophilus influenzae (strain ATCC 51907 / DSM 11121 / KW20 / Rd)).